A 101-amino-acid polypeptide reads, in one-letter code: NADH-quinone oxidoreductase subunit K (101 aa).

A run of 3 helical transmembrane segments spans residues 4–24 (LTHF…GIFL), 30–50 (IILL…FIAF), and 61–81 (IFVF…LAIL).

This sequence belongs to the complex I subunit 4L family. In terms of assembly, NDH-1 is composed of 14 different subunits. Subunits NuoA, H, J, K, L, M, N constitute the membrane sector of the complex.

The protein localises to the cell inner membrane. The catalysed reaction is a quinone + NADH + 5 H(+)(in) = a quinol + NAD(+) + 4 H(+)(out). Its function is as follows. NDH-1 shuttles electrons from NADH, via FMN and iron-sulfur (Fe-S) centers, to quinones in the respiratory chain. The immediate electron acceptor for the enzyme in this species is believed to be ubiquinone. Couples the redox reaction to proton translocation (for every two electrons transferred, four hydrogen ions are translocated across the cytoplasmic membrane), and thus conserves the redox energy in a proton gradient. This is NADH-quinone oxidoreductase subunit K from Chromobacterium violaceum (strain ATCC 12472 / DSM 30191 / JCM 1249 / CCUG 213 / NBRC 12614 / NCIMB 9131 / NCTC 9757 / MK).